We begin with the raw amino-acid sequence, 239 residues long: Ribosomal RNA small subunit methyltransferase G (239 aa).

Residues glycine 76, phenylalanine 81, aspartate 99 to serine 101, isoleucine 128 to glutamate 129, and arginine 147 each bind S-adenosyl-L-methionine.

The protein belongs to the methyltransferase superfamily. RNA methyltransferase RsmG family.

The protein localises to the cytoplasm. Its function is as follows. Specifically methylates the N7 position of a guanine in 16S rRNA. The protein is Ribosomal RNA small subunit methyltransferase G of Prochlorococcus marinus (strain MIT 9515).